A 194-amino-acid chain; its full sequence is Imidazoleglycerol-phosphate dehydratase (194 aa).

This sequence belongs to the imidazoleglycerol-phosphate dehydratase family.

The protein localises to the cytoplasm. The enzyme catalyses D-erythro-1-(imidazol-4-yl)glycerol 3-phosphate = 3-(imidazol-4-yl)-2-oxopropyl phosphate + H2O. The protein operates within amino-acid biosynthesis; L-histidine biosynthesis; L-histidine from 5-phospho-alpha-D-ribose 1-diphosphate: step 6/9. In Caldicellulosiruptor saccharolyticus (strain ATCC 43494 / DSM 8903 / Tp8T 6331), this protein is Imidazoleglycerol-phosphate dehydratase.